The chain runs to 302 residues: MTSTVAQICSDLKGAIDKKDELRIAFIASEYSSPSRLKIAQSYEATYKTPITEAIKKSLKGGTAEDLLVNMWVSRHEHRAELINKALGGSSDEEAIRELVFLCNPEDWHETASVYNQKYQKIMQDAVTKAIGSKSHWAKLVAGWMEHKREDRGSVENDVKYLKELIDAPVTDGNALAQFFASTTPDEYTQIADKFCEEYNLSIDQALVRPLKENEDDLEAYAAAHFALHGLPVLAAQLINKACRPKNGNERSICRITTLMVDQCLAAKYAYKLYGDMGADLSRCFDERMAPILRTLWRVTDA.

Annexin repeat units lie at residues Met-1–Trp-72, Ser-74–Trp-144, Gly-153–Phe-226, and Gly-230–Arg-298.

Belongs to the annexin family. Giardin subunit alpha subfamily.

The protein resides in the cytoplasm. The protein localises to the cytoskeleton. Giardins are involved in parasite attachment to the intestinal mucosa and in the cytoskeletal disassembly and reassembly that marks the transition from infectious trophozoite to transmissible cyst. They may interact with other cytoskeletal proteins such as microtubules in the microribbons or crossbridges, to maintain the integrity of the ventral disk. This chain is Giardin subunit alpha-5, found in Giardia intestinalis (Giardia lamblia).